Here is a 159-residue protein sequence, read N- to C-terminus: Membrane protein FAM174B (159 aa).

The signal sequence occupies residues 1–27 (MRAALPPARLLPLLLLLALLGAPAARA). Residues 28–73 (SRAQSAAPPQPGAERQPRPPPGPGPGNATGTGSGEAAGGGGSSNSS) are disordered. The Extracellular segment spans residues 28–90 (SRAQSAAPPQ…ISSLLRDLHT (63 aa)). Over residues 52 to 69 (PGNATGTGSGEAAGGGGS) the composition is skewed to gly residues. N-linked (GlcNAc...) asparagine glycosylation is present at asparagine 54. A helical membrane pass occupies residues 91-111 (LKAAVIVACAFTAFLIACLLL). Residues 112–159 (RVFRSGKRLKKTRKYDIITTPAERVEMAPLNEEDDEDEDSTVFDIKYR) are Cytoplasmic-facing.

The protein belongs to the FAM174 family.

It is found in the cell membrane. The protein localises to the golgi apparatus. Its function is as follows. Essential for Golgi structural integrity. In Bos taurus (Bovine), this protein is Membrane protein FAM174B (FAM174B).